Reading from the N-terminus, the 255-residue chain is NADH dehydrogenase [ubiquinone] flavoprotein 2, mitochondrial (255 aa).

The transit peptide at 1–35 (MLARLAAKRLLEIRQVFRQPTSQVTRSLSTALNYH) directs the protein to the mitochondrion. The [2Fe-2S] cluster site is built by C130, C135, C171, and C175. Residues 214–255 (RKGEKPPHGTQNPKRIKCGPEGGNKTLLGEPKPPQFRDLDAC) form a disordered region.

It belongs to the complex I 24 kDa subunit family. As to quaternary structure, complex I is composed of at least 49 different subunits. This is a component of the flavoprotein-sulfur (FP) fragment of the enzyme. [2Fe-2S] cluster is required as a cofactor.

The protein resides in the mitochondrion inner membrane. The enzyme catalyses a ubiquinone + NADH + 5 H(+)(in) = a ubiquinol + NAD(+) + 4 H(+)(out). Core subunit of the mitochondrial membrane respiratory chain NADH dehydrogenase (Complex I) that is believed to belong to the minimal assembly required for catalysis. Complex I functions in the transfer of electrons from NADH to the respiratory chain. The immediate electron acceptor for the enzyme is believed to be ubiquinone. The chain is NADH dehydrogenase [ubiquinone] flavoprotein 2, mitochondrial from Arabidopsis thaliana (Mouse-ear cress).